The sequence spans 316 residues: ATP synthase gamma chain (316 aa).

Belongs to the ATPase gamma chain family. In terms of assembly, F-type ATPases have 2 components, CF(1) - the catalytic core - and CF(0) - the membrane proton channel. CF(1) has five subunits: alpha(3), beta(3), gamma(1), delta(1), epsilon(1). CF(0) has three main subunits: a, b and c.

It localises to the cellular thylakoid membrane. Functionally, produces ATP from ADP in the presence of a proton gradient across the membrane. The gamma chain is believed to be important in regulating ATPase activity and the flow of protons through the CF(0) complex. The protein is ATP synthase gamma chain of Prochlorococcus marinus (strain AS9601).